The chain runs to 287 residues: ATP synthase gamma chain (287 aa).

The protein belongs to the ATPase gamma chain family. As to quaternary structure, F-type ATPases have 2 components, CF(1) - the catalytic core - and CF(0) - the membrane proton channel. CF(1) has five subunits: alpha(3), beta(3), gamma(1), delta(1), epsilon(1). CF(0) has three main subunits: a, b and c.

It localises to the cell membrane. Produces ATP from ADP in the presence of a proton gradient across the membrane. The gamma chain is believed to be important in regulating ATPase activity and the flow of protons through the CF(0) complex. This is ATP synthase gamma chain from Geobacillus stearothermophilus (Bacillus stearothermophilus).